The primary structure comprises 482 residues: 3-isopropylmalate dehydratase large subunit (482 aa).

The [4Fe-4S] cluster site is built by C353, C414, and C417.

The protein belongs to the aconitase/IPM isomerase family. LeuC type 1 subfamily. As to quaternary structure, heterodimer of LeuC and LeuD. It depends on [4Fe-4S] cluster as a cofactor.

It carries out the reaction (2R,3S)-3-isopropylmalate = (2S)-2-isopropylmalate. The protein operates within amino-acid biosynthesis; L-leucine biosynthesis; L-leucine from 3-methyl-2-oxobutanoate: step 2/4. Functionally, catalyzes the isomerization between 2-isopropylmalate and 3-isopropylmalate, via the formation of 2-isopropylmaleate. This chain is 3-isopropylmalate dehydratase large subunit, found in Xanthomonas oryzae pv. oryzae (strain MAFF 311018).